The following is a 283-amino-acid chain: Thymidylate synthase (283 aa).

Residue arginine 22 participates in dUMP binding. Cysteine 160 acts as the Nucleophile in catalysis. Residues 180–183 (RSCD), asparagine 191, and 221–223 (HIY) each bind dUMP. Aspartate 183 is a binding site for (6R)-5,10-methylene-5,6,7,8-tetrahydrofolate. Serine 282 contributes to the (6R)-5,10-methylene-5,6,7,8-tetrahydrofolate binding site.

The protein belongs to the thymidylate synthase family. Bacterial-type ThyA subfamily. In terms of assembly, homodimer.

The protein localises to the cytoplasm. The enzyme catalyses dUMP + (6R)-5,10-methylene-5,6,7,8-tetrahydrofolate = 7,8-dihydrofolate + dTMP. The protein operates within pyrimidine metabolism; dTTP biosynthesis. Functionally, catalyzes the reductive methylation of 2'-deoxyuridine-5'-monophosphate (dUMP) to 2'-deoxythymidine-5'-monophosphate (dTMP) while utilizing 5,10-methylenetetrahydrofolate (mTHF) as the methyl donor and reductant in the reaction, yielding dihydrofolate (DHF) as a by-product. This enzymatic reaction provides an intracellular de novo source of dTMP, an essential precursor for DNA biosynthesis. This Vibrio cholerae serotype O1 (strain ATCC 39315 / El Tor Inaba N16961) protein is Thymidylate synthase.